Consider the following 86-residue polypeptide: Large ribosomal subunit protein bL27 (86 aa).

The segment at 1–22 (MAHKKAGGSSRNGRDSESKRLG) is disordered.

The protein belongs to the bacterial ribosomal protein bL27 family.

This Acidithiobacillus ferrooxidans (strain ATCC 23270 / DSM 14882 / CIP 104768 / NCIMB 8455) (Ferrobacillus ferrooxidans (strain ATCC 23270)) protein is Large ribosomal subunit protein bL27.